Here is a 459-residue protein sequence, read N- to C-terminus: ATP synthase subunit beta (459 aa).

149–156 provides a ligand contact to ATP; sequence GGAGVGKT.

This sequence belongs to the ATPase alpha/beta chains family. As to quaternary structure, F-type ATPases have 2 components, CF(1) - the catalytic core - and CF(0) - the membrane proton channel. CF(1) has five subunits: alpha(3), beta(3), gamma(1), delta(1), epsilon(1). CF(0) has three main subunits: a(1), b(2) and c(9-12). The alpha and beta chains form an alternating ring which encloses part of the gamma chain. CF(1) is attached to CF(0) by a central stalk formed by the gamma and epsilon chains, while a peripheral stalk is formed by the delta and b chains.

Its subcellular location is the cell inner membrane. It carries out the reaction ATP + H2O + 4 H(+)(in) = ADP + phosphate + 5 H(+)(out). Its function is as follows. Produces ATP from ADP in the presence of a proton gradient across the membrane. The catalytic sites are hosted primarily by the beta subunits. In Pseudomonas syringae pv. tomato (strain ATCC BAA-871 / DC3000), this protein is ATP synthase subunit beta.